The following is a 376-amino-acid chain: Putative F-box only protein 9 (376 aa).

Residues 1–44 enclose the F-box domain; the sequence is MSDLPPDLVEDILSRVPATSLKRLRFTCKQWNSLFKNRRFTEKH.

The chain is Putative F-box only protein 9 (FBX9) from Arabidopsis thaliana (Mouse-ear cress).